The chain runs to 101 residues: Small ribosomal subunit protein bS18c (101 aa).

Belongs to the bacterial ribosomal protein bS18 family. As to quaternary structure, part of the 30S ribosomal subunit.

It localises to the plastid. The protein resides in the chloroplast. This chain is Small ribosomal subunit protein bS18c, found in Panax ginseng (Korean ginseng).